We begin with the raw amino-acid sequence, 137 residues long: Bacteriohemerythrin (137 aa).

Positions 21, 53, 57, 72, 76, 112, and 117 each coordinate Fe cation.

The protein belongs to the hemerythrin family. Monomer.

In terms of biological role, oxygen-binding protein. May be involved in a storage mechanism or for delivery to oxygen-requiring enzymes. The oxygen-binding site contains two iron atoms. In Ralstonia nicotianae (strain ATCC BAA-1114 / GMI1000) (Ralstonia solanacearum), this protein is Bacteriohemerythrin.